The primary structure comprises 420 residues: ATP-dependent Clp protease ATP-binding subunit ClpX (420 aa).

The ClpX-type ZB domain maps to 3–57 (KKTPGTNGKQKLFCSFCGKEQDAVKRLVAGPGVYICDECISLCNEIIAEDHEHSH). Positions 16, 19, 38, and 41 each coordinate Zn(2+). 122-129 (PTGSGKTL) lines the ATP pocket.

The protein belongs to the ClpX chaperone family. As to quaternary structure, component of the ClpX-ClpP complex. Forms a hexameric ring that, in the presence of ATP, binds to fourteen ClpP subunits assembled into a disk-like structure with a central cavity, resembling the structure of eukaryotic proteasomes.

Its function is as follows. ATP-dependent specificity component of the Clp protease. It directs the protease to specific substrates. Can perform chaperone functions in the absence of ClpP. In Leptospira borgpetersenii serovar Hardjo-bovis (strain L550), this protein is ATP-dependent Clp protease ATP-binding subunit ClpX.